The primary structure comprises 242 residues: Protein HTATIP2 (242 aa).

The residue at position 2 (Ala2) is an N-acetylalanine. Residues 2–25 (AETEALSKLREDFRMQNKSVFILG) are required for interaction with elongation factor EEF1A1. NADPH is bound by residues Ser27, Gly28, Glu29, Thr30, Arg52, Arg53, Leu92, Gly93, Tyr143, Lys147, Leu170, and Arg178. The active-site Proton acceptor is Tyr143. The active site involves Lys147.

As to quaternary structure, monomer. Forms homodimers during oxidative stress. Interacts (via N-terminus) with elongation factor EEF1A1 (via middle-region); the interaction is direct and competes with EEF1A1 binding to guanyl-nucleotide exchange factor EEF1B2, thereby inhibiting GDP for GTP exchange and reactivation of EEF1A1. Interacts with nuclear transport receptors XPO4, IPO5/RANBP5, IPO7, IPO9 and KPNB1 as well as GCN1L1/GCN1 and LRPPRC probably through their HEAT repeats. Binds NCOA5/CIA. In terms of assembly, interacts (via N-terminus) with proteasome subunit PSMD4/s5a. (Microbial infection) Interacts with HIV-1 Tat (via activation domain). In terms of tissue distribution, high levels in liver, lung, skeletal muscle, pancreas and placenta. Moderate levels in heart and kidney. Low levels in brain. Not expressed or low levels in variant small cell lung carcinomas, 33% of hepatocellular carcinomas and neuroblastomas. Levels are reduced in the heart of patients with hypertrophic cardiomyopathy and failing hearts.

It localises to the cytoplasm. Functionally, represses translation by preventing reactivation of elongation factor eEF1A. May also inhibit nuclear import by competing with nuclear import substrates for binding to a subset of nuclear transport receptors. Has additionally been proposed to act as a redox sensor involved in cellular oxidative stress surveillance. This chain is Protein HTATIP2, found in Homo sapiens (Human).